Consider the following 342-residue polypeptide: Porphobilinogen deaminase (342 aa).

C249 is modified (S-(dipyrrolylmethanemethyl)cysteine). Positions 323-342 (AAAKQGAAEDGAADSAATGE) are disordered.

It belongs to the HMBS family. As to quaternary structure, monomer. Requires dipyrromethane as cofactor.

The catalysed reaction is 4 porphobilinogen + H2O = hydroxymethylbilane + 4 NH4(+). It participates in porphyrin-containing compound metabolism; protoporphyrin-IX biosynthesis; coproporphyrinogen-III from 5-aminolevulinate: step 2/4. Its function is as follows. Tetrapolymerization of the monopyrrole PBG into the hydroxymethylbilane pre-uroporphyrinogen in several discrete steps. This is Porphobilinogen deaminase from Paraburkholderia phytofirmans (strain DSM 17436 / LMG 22146 / PsJN) (Burkholderia phytofirmans).